The sequence spans 151 residues: Deoxyuridine 5'-triphosphate nucleotidohydrolase (151 aa).

Substrate contacts are provided by residues 70–72, Asn-83, 87–89, and Met-97; these read RSG and LID.

The protein belongs to the dUTPase family. Mg(2+) serves as cofactor.

The catalysed reaction is dUTP + H2O = dUMP + diphosphate + H(+). It functions in the pathway pyrimidine metabolism; dUMP biosynthesis; dUMP from dCTP (dUTP route): step 2/2. Functionally, this enzyme is involved in nucleotide metabolism: it produces dUMP, the immediate precursor of thymidine nucleotides and it decreases the intracellular concentration of dUTP so that uracil cannot be incorporated into DNA. The sequence is that of Deoxyuridine 5'-triphosphate nucleotidohydrolase from Salmonella enteritidis PT4 (strain P125109).